Reading from the N-terminus, the 246-residue chain is Endonuclease NucS (246 aa).

This sequence belongs to the NucS endonuclease family.

The protein resides in the cytoplasm. Cleaves both 3' and 5' ssDNA extremities of branched DNA structures. The protein is Endonuclease NucS of Corynebacterium urealyticum (strain ATCC 43042 / DSM 7109).